The sequence spans 377 residues: Nitric oxide reductase FlRd-NAD(+) reductase (377 aa).

The protein belongs to the FAD-dependent oxidoreductase family. FAD is required as a cofactor.

It is found in the cytoplasm. The enzyme catalyses 2 reduced [nitric oxide reductase rubredoxin domain] + NAD(+) + H(+) = 2 oxidized [nitric oxide reductase rubredoxin domain] + NADH. Its pathway is nitrogen metabolism; nitric oxide reduction. In terms of biological role, one of at least two accessory proteins for anaerobic nitric oxide (NO) reductase. Reduces the rubredoxin moiety of NO reductase. This Shigella boydii serotype 18 (strain CDC 3083-94 / BS512) protein is Nitric oxide reductase FlRd-NAD(+) reductase.